A 619-amino-acid chain; its full sequence is Vitamin B12 transporter BtuB (619 aa).

The N-terminal stretch at 1 to 25 (MINKKRLLLSTVSIMVISGWNQASA) is a signal peptide. A TonB box motif is present at residues 31-38 (DSLVVTAS). The TBDR plug domain occupies 43 to 157 (PISSILAPYT…IGGVINIITT (115 aa)). Cyanocob(III)alamin-binding positions include Leu-88, Ser-90, and 115 to 116 (IS). In terms of domain architecture, TBDR beta-barrel spans 160–619 (KLGTSLNVGI…EYYLTGSYNF (460 aa)). 3 beta stranded membrane passes run 163–170 (TSLNVGIG), 174–183 (YQTYDGATQQ), and 189–200 (TVLTAAANYTYT). The Ca(2+) site is built by Asp-204, Gln-216, Asp-218, and Asp-220. A run of 2 beta stranded transmembrane segments spans residues 222–232 (FMSKMLWLGVD) and 237–253 (EQVS…NRTS). Positions 254 and 255 each coordinate Ca(2+). Cyanocob(III)alamin is bound at residue Ala-256. Residue Asp-268 coordinates Ca(2+). 17 beta stranded membrane passes run 270–284 (RELY…VRFN), 286–303 (GIYS…KDYN), 316–332 (SLND…NTFQ), 335–344 (QGIVSTGVDF), 360–376 (KTVR…QQLK), 378–388 (FILEGAIRSDK), 392–407 (AGWN…WEFI), 410–424 (YRLI…KAPT), 441–450 (ESKQWEGGIE), 456–465 (LTWRMTVYRN), 478–495 (YYNI…TGLI), 499–514 (MFQH…PRNS), 522–534 (RRAK…QLDW), 540–556 (DWGL…DKDF), 563–577 (RVKL…LTVS), 590–601 (IANLLDKDYETV), and 607–619 (PGRE…SYNF). Residue Ser-316 coordinates cyanocob(III)alamin. Arg-522 is a binding site for cyanocob(III)alamin. Positions 602–619 (YGYRIPGREYYLTGSYNF) match the TonB C-terminal box motif.

The protein belongs to the TonB-dependent receptor family. BtuB (TC 1.B.14.3.1) subfamily.

It is found in the cell outer membrane. Its function is as follows. Involved in the active translocation of vitamin B12 (cyanocobalamin) across the outer membrane to the periplasmic space. It derives its energy for transport by interacting with the trans-periplasmic membrane protein TonB. The sequence is that of Vitamin B12 transporter BtuB from Photorhabdus laumondii subsp. laumondii (strain DSM 15139 / CIP 105565 / TT01) (Photorhabdus luminescens subsp. laumondii).